A 126-amino-acid polypeptide reads, in one-letter code: Large ribosomal subunit protein bL12 (126 aa).

Belongs to the bacterial ribosomal protein bL12 family. In terms of assembly, homodimer. Part of the ribosomal stalk of the 50S ribosomal subunit. Forms a multimeric L10(L12)X complex, where L10 forms an elongated spine to which 2 to 4 L12 dimers bind in a sequential fashion. Binds GTP-bound translation factors.

Functionally, forms part of the ribosomal stalk which helps the ribosome interact with GTP-bound translation factors. Is thus essential for accurate translation. This Trichlorobacter lovleyi (strain ATCC BAA-1151 / DSM 17278 / SZ) (Geobacter lovleyi) protein is Large ribosomal subunit protein bL12.